A 396-amino-acid polypeptide reads, in one-letter code: Elongation factor Tu (396 aa).

In terms of domain architecture, tr-type G spans 10 to 206 (KPHVNVGTIG…ALDSYIPTPE (197 aa)). The segment at 19–26 (GHVDHGKT) is G1. 19 to 26 (GHVDHGKT) is a binding site for GTP. Threonine 26 contacts Mg(2+). Residues 60–64 (GITIN) are G2. The segment at 81-84 (DCPG) is G3. Residues 81–85 (DCPGH) and 136–139 (NKCD) contribute to the GTP site. Residues 136 to 139 (NKCD) form a G4 region. The G5 stretch occupies residues 174 to 176 (SAK).

It belongs to the TRAFAC class translation factor GTPase superfamily. Classic translation factor GTPase family. EF-Tu/EF-1A subfamily. As to quaternary structure, monomer.

Its subcellular location is the cytoplasm. The catalysed reaction is GTP + H2O = GDP + phosphate + H(+). Functionally, GTP hydrolase that promotes the GTP-dependent binding of aminoacyl-tRNA to the A-site of ribosomes during protein biosynthesis. This is Elongation factor Tu from Methylibium petroleiphilum (strain ATCC BAA-1232 / LMG 22953 / PM1).